The chain runs to 496 residues: Probable cytosol aminopeptidase (496 aa).

Mn(2+) is bound by residues Lys-266 and Asp-271. Residue Lys-278 is part of the active site. Positions 289, 348, and 350 each coordinate Mn(2+). Arg-352 is a catalytic residue.

It belongs to the peptidase M17 family. Mn(2+) is required as a cofactor.

It localises to the cytoplasm. It catalyses the reaction Release of an N-terminal amino acid, Xaa-|-Yaa-, in which Xaa is preferably Leu, but may be other amino acids including Pro although not Arg or Lys, and Yaa may be Pro. Amino acid amides and methyl esters are also readily hydrolyzed, but rates on arylamides are exceedingly low.. It carries out the reaction Release of an N-terminal amino acid, preferentially leucine, but not glutamic or aspartic acids.. In terms of biological role, presumably involved in the processing and regular turnover of intracellular proteins. Catalyzes the removal of unsubstituted N-terminal amino acids from various peptides. This is Probable cytosol aminopeptidase from Pseudomonas fluorescens (strain Pf0-1).